The primary structure comprises 90 residues: Phosphocarrier protein HPr (90 aa).

The region spanning 1–89 (MPAREITIIN…ELINNFFDEG (89 aa)) is the HPr domain. His15 acts as the Pros-phosphohistidine intermediate in catalysis.

Belongs to the HPr family.

It localises to the cytoplasm. Functionally, general (non sugar-specific) component of the phosphoenolpyruvate-dependent sugar phosphotransferase system (sugar PTS). This major carbohydrate active-transport system catalyzes the phosphorylation of incoming sugar substrates concomitantly with their translocation across the cell membrane. The phosphoryl group from phosphoenolpyruvate (PEP) is transferred to the phosphoryl carrier protein HPr by enzyme I. Phospho-HPr then transfers it to the PTS EIIA domain. This chain is Phosphocarrier protein HPr (ptsH), found in Pseudomonas putida (Arthrobacter siderocapsulatus).